Reading from the N-terminus, the 527-residue chain is Cytochrome b5 reductase 4 (527 aa).

The tract at residues 1–24 (MLNVPSQAFPAAGSQQRVAPAGQS) is disordered. A Cytochrome b5 heme-binding domain is found at 56–132 (LIEVTEDELK…LKECLVGRMA (77 aa)). Heme is bound by residues H91 and H114. The disordered stretch occupies residues 138–171 (ALQAHTEKTESTHLNGLSAPPSLRPEPLSAPLPA). Residues 173-264 (DHRPRYDWFQ…SVKEKWTQLG (92 aa)) enclose the CS domain. Residues 281-392 (LFYRECVLLS…GGPEGSFTLR (112 aa)) enclose the FAD-binding FR-type domain. Residues 372–387 (ANLP…GPEG) and 399–431 (HLYM…KMKL) each bind FAD.

It belongs to the flavoprotein pyridine nucleotide cytochrome reductase family. The cofactor is FAD.

Its subcellular location is the endoplasmic reticulum. The catalysed reaction is 2 Fe(III)-[cytochrome b5] + NADH = 2 Fe(II)-[cytochrome b5] + NAD(+) + H(+). In terms of biological role, NADH-cytochrome b5 reductase involved in endoplasmic reticulum stress response pathway. This chain is Cytochrome b5 reductase 4 (cyb5r4), found in Danio rerio (Zebrafish).